Here is a 375-residue protein sequence, read N- to C-terminus: Solute carrier family 35 member F2 (375 aa).

Residue Met-1 is modified to N-acetylmethionine. Residues Ser-5, Ser-22, Ser-25, and Ser-28 each carry the phosphoserine modification. Helical transmembrane passes span Ile-39 to Thr-59, Met-73 to Phe-93, Trp-108 to Val-126, Ser-136 to Leu-156, Phe-165 to Ala-185, Val-195 to Cys-215, Glu-227 to Val-247, Leu-263 to Ile-283, Ser-290 to Phe-310, and Phe-314 to Ser-334. The residue at position 372 (Ser-372) is a Phosphoserine.

Belongs to the SLC35F solute transporter family.

The protein localises to the membrane. Functionally, putative solute transporter. This chain is Solute carrier family 35 member F2 (Slc35f2), found in Mus musculus (Mouse).